The sequence spans 275 residues: Adenylate kinase (275 aa).

54-59 (GAGKGT) provides a ligand contact to ATP. The tract at residues 74-103 (ATGDMLRSQVAKKTPLGREAKKIMDQGGLV) is NMP. Residues Thr-75, Arg-80, 101-103 (GLV), 130-133 (GFPR), and Gln-137 contribute to the AMP site. The interval 171–208 (GRLVHPASGRSYHRVFNPPKADMKDDITGEPLVSRSDD) is LID. Residues Arg-172 and 181 to 182 (SY) contribute to the ATP site. AMP is bound by residues Arg-205 and Arg-216. Gln-244 provides a ligand contact to ATP.

The protein belongs to the adenylate kinase family. AK2 subfamily. In terms of assembly, monomer.

It is found in the cytoplasm. The protein resides in the cytosol. Its subcellular location is the mitochondrion intermembrane space. It carries out the reaction AMP + ATP = 2 ADP. Catalyzes the reversible transfer of the terminal phosphate group between ATP and AMP. Plays an important role in cellular energy homeostasis and in adenine nucleotide metabolism. Adenylate kinase activity is critical for regulation of the phosphate utilization and the AMP de novo biosynthesis pathways. The polypeptide is Adenylate kinase (adk1) (Botryotinia fuckeliana (strain B05.10) (Noble rot fungus)).